The chain runs to 96 residues: Aspartyl/glutamyl-tRNA(Asn/Gln) amidotransferase subunit C (96 aa).

This sequence belongs to the GatC family. In terms of assembly, heterotrimer of A, B and C subunits.

It carries out the reaction L-glutamyl-tRNA(Gln) + L-glutamine + ATP + H2O = L-glutaminyl-tRNA(Gln) + L-glutamate + ADP + phosphate + H(+). It catalyses the reaction L-aspartyl-tRNA(Asn) + L-glutamine + ATP + H2O = L-asparaginyl-tRNA(Asn) + L-glutamate + ADP + phosphate + 2 H(+). Functionally, allows the formation of correctly charged Asn-tRNA(Asn) or Gln-tRNA(Gln) through the transamidation of misacylated Asp-tRNA(Asn) or Glu-tRNA(Gln) in organisms which lack either or both of asparaginyl-tRNA or glutaminyl-tRNA synthetases. The reaction takes place in the presence of glutamine and ATP through an activated phospho-Asp-tRNA(Asn) or phospho-Glu-tRNA(Gln). In Aliarcobacter butzleri (strain RM4018) (Arcobacter butzleri), this protein is Aspartyl/glutamyl-tRNA(Asn/Gln) amidotransferase subunit C.